The following is a 208-amino-acid chain: FMN-dependent NADH:quinone oxidoreductase 2 (208 aa).

This sequence belongs to the azoreductase type 1 family. In terms of assembly, homodimer. Requires FMN as cofactor.

The enzyme catalyses 2 a quinone + NADH + H(+) = 2 a 1,4-benzosemiquinone + NAD(+). The catalysed reaction is N,N-dimethyl-1,4-phenylenediamine + anthranilate + 2 NAD(+) = 2-(4-dimethylaminophenyl)diazenylbenzoate + 2 NADH + 2 H(+). Its function is as follows. Quinone reductase that provides resistance to thiol-specific stress caused by electrophilic quinones. Functionally, also exhibits azoreductase activity. Catalyzes the reductive cleavage of the azo bond in aromatic azo compounds to the corresponding amines. The polypeptide is FMN-dependent NADH:quinone oxidoreductase 2 (Bacillus anthracis).